The primary structure comprises 508 residues: Monocarboxylate transporter 9 (508 aa).

Helical transmembrane passes span 13 to 33 (WVIVVVSFFTQFLCYGSPLAV), 53 to 73 (WVGSLASGVGLLASPVCSLFV), 80 to 100 (PVTIFSGFLVAGGLMLSSLAP), 102 to 122 (IYFLFFSYGIVVGLGCGLLYT), 137 to 157 (GLALGLISTGSSVGLFIYAAL), and 164 to 184 (FYGLDGCLLIVGALALNILAC). The tract at residues 242-263 (GDWGRETSLPKNPTGAAHTKEP) is disordered. 6 helical membrane-spanning segments follow: residues 303-323 (VFSALFVAILLFDIGGFPPSL), 341-361 (IPLISIFGIMTAVGKLLLGIL), 370-390 (LYLYVATLIITGLALCAIPLA), 396-416 (LAILSGILGFLTGNWSIFPYV), 431-451 (GILMFFAGLGNSLGPPIVGWF), and 460-480 (IAFYFSGFCVLLGGFILLLAI).

The protein belongs to the major facilitator superfamily. Monocarboxylate porter (TC 2.A.1.13) family. As to expression, expressed in the liver and kidneys. In the liver localizes on the sinusoidal membrane of the hepatocytes.

It is found in the cell membrane. It catalyses the reaction creatine(in) = creatine(out). The catalysed reaction is (R)-carnitine(in) = (R)-carnitine(out). Functionally, extracellular pH-and Na(+)-sensitive low-affinity creatine transporter. Also functions as a pH-independent carnitine efflux transporter. This Rattus norvegicus (Rat) protein is Monocarboxylate transporter 9 (Slc16a9).